The sequence spans 140 residues: Protein KRTCAP2 homolog (140 aa).

Transmembrane regions (helical) follow at residues 11–31 (LLSS…LRFC), 40–60 (LNVL…LTCV), 74–94 (AKLV…AGIV), and 98–118 (CATT…RISI).

Belongs to the KRTCAP2 family. In terms of assembly, component of the oligosaccharyltransferase (OST) complex.

It is found in the membrane. Subunit of the oligosaccharyl transferase (OST) complex that catalyzes the initial transfer of a defined glycan (Glc(3)Man(9)GlcNAc(2) in eukaryotes) from the lipid carrier dolichol-pyrophosphate to an asparagine residue within an Asn-X-Ser/Thr consensus motif in nascent polypeptide chains, the first step in protein N-glycosylation. N-glycosylation occurs cotranslationally and the complex associates with the Sec61 complex at the channel-forming translocon complex that mediates protein translocation across the endoplasmic reticulum (ER). All subunits are required for a maximal enzyme activity. This chain is Protein KRTCAP2 homolog, found in Drosophila pseudoobscura pseudoobscura (Fruit fly).